A 143-amino-acid chain; its full sequence is Transcriptional regulator MraZ (143 aa).

2 SpoVT-AbrB domains span residues 5–47 (SHAP…PMAE) and 76–119 (AADD…DAQR).

Belongs to the MraZ family. Forms oligomers.

It localises to the cytoplasm. The protein localises to the nucleoid. The sequence is that of Transcriptional regulator MraZ from Frankia casuarinae (strain DSM 45818 / CECT 9043 / HFP020203 / CcI3).